Consider the following 461-residue polypeptide: Epidermin leader peptide-processing serine protease EpiP (461 aa).

Residues 1–23 (MNKFKFFIVFLILSLVFLQNEYA) form the signal peptide. A Peptidase S8 domain is found at 121 to 459 (QWDMRKITNE…NGKLDVYKLL (339 aa)). Active-site charge relay system residues include Asp-149, His-194, and Ser-402.

The protein belongs to the peptidase S8 family.

It participates in antibiotic biosynthesis; epidermin biosynthesis. In terms of biological role, protease which cleaves the matured lantibiotic from the modified prepeptide. This chain is Epidermin leader peptide-processing serine protease EpiP (epiP), found in Staphylococcus epidermidis.